The following is a 350-amino-acid chain: Hepatocyte nuclear factor 3-gamma (350 aa).

A DNA-binding region (fork-head) is located at residues 116-207 (AKPPYSYISL…GNMFENGCYL (92 aa)). Residues 217-276 (EKVKKGGSGAATTTRNGTGSAASTTTPAATVTSPPQPPPPAPEPEAQGGEDVGALDCGSP) are disordered. Low complexity predominate over residues 226–249 (AATTTRNGTGSAASTTTPAATVTS). Over residues 250–259 (PPQPPPPAPE) the composition is skewed to pro residues.

In terms of assembly, interacts with FOXA2. In terms of tissue distribution, expressed in erythroleukemia and hepatoma cell lines and in liver and pancreas. Not expressed in any other cell lines or tissues examined.

It localises to the nucleus. In terms of biological role, transcription factor that is thought to act as a 'pioneer' factor opening the compacted chromatin for other proteins through interactions with nucleosomal core histones and thereby replacing linker histones at target enhancer and/or promoter sites. Originally described as a transcription activator for a number of liver genes such as AFP, albumin, tyrosine aminotransferase, PEPCK, etc. Interacts with the cis-acting regulatory regions of these genes. Involved in glucose homeostasis; binds to and activates transcription from the G6PC1 promoter. Binds to the CYP3A4 promoter and activates its transcription in cooperation with CEBPA. Binds to the CYP3A7 promoter together with members of the CTF/NF-I family. Involved in regulation of neuronal-specific transcription. May be involved in regulation of spermatogenesis. This is Hepatocyte nuclear factor 3-gamma (FOXA3) from Homo sapiens (Human).